Reading from the N-terminus, the 568-residue chain is CTP synthase (568 aa).

The interval 1-276 (MPQARTIKHV…DAYLVRRLGL (276 aa)) is amidoligase domain. Ser18 is a CTP binding site. A UTP-binding site is contributed by Ser18. ATP-binding positions include 19–24 (SLGKGL) and Asp76. Residues Asp76 and Glu150 each contribute to the Mg(2+) site. CTP is bound by residues 157 to 159 (DIE), 197 to 202 (KTKPTQ), and Lys233. Residues 197-202 (KTKPTQ) and Lys233 contribute to the UTP site. The region spanning 301–550 (RIALVGKYVD…VNAALEYRAA (250 aa)) is the Glutamine amidotransferase type-1 domain. Residue Gly364 coordinates L-glutamine. Catalysis depends on Cys391, which acts as the Nucleophile; for glutamine hydrolysis. L-glutamine-binding positions include 392–395 (LGLQ), Glu415, and Arg476. Catalysis depends on residues His523 and Glu525.

It belongs to the CTP synthase family. As to quaternary structure, homotetramer.

It catalyses the reaction UTP + L-glutamine + ATP + H2O = CTP + L-glutamate + ADP + phosphate + 2 H(+). It carries out the reaction L-glutamine + H2O = L-glutamate + NH4(+). The catalysed reaction is UTP + NH4(+) + ATP = CTP + ADP + phosphate + 2 H(+). The protein operates within pyrimidine metabolism; CTP biosynthesis via de novo pathway; CTP from UDP: step 2/2. Its activity is regulated as follows. Allosterically activated by GTP, when glutamine is the substrate; GTP has no effect on the reaction when ammonia is the substrate. The allosteric effector GTP functions by stabilizing the protein conformation that binds the tetrahedral intermediate(s) formed during glutamine hydrolysis. Inhibited by the product CTP, via allosteric rather than competitive inhibition. Functionally, catalyzes the ATP-dependent amination of UTP to CTP with either L-glutamine or ammonia as the source of nitrogen. Regulates intracellular CTP levels through interactions with the four ribonucleotide triphosphates. The protein is CTP synthase of Saccharopolyspora erythraea (strain ATCC 11635 / DSM 40517 / JCM 4748 / NBRC 13426 / NCIMB 8594 / NRRL 2338).